Consider the following 227-residue polypeptide: Probable septum site-determining protein MinC (227 aa).

This sequence belongs to the MinC family. As to quaternary structure, interacts with MinD and FtsZ.

In terms of biological role, cell division inhibitor that blocks the formation of polar Z ring septums. Rapidly oscillates between the poles of the cell to destabilize FtsZ filaments that have formed before they mature into polar Z rings. Prevents FtsZ polymerization. This Shouchella clausii (strain KSM-K16) (Alkalihalobacillus clausii) protein is Probable septum site-determining protein MinC.